Reading from the N-terminus, the 91-residue chain is Probable Fe(2+)-trafficking protein (91 aa).

Belongs to the Fe(2+)-trafficking protein family.

Its function is as follows. Could be a mediator in iron transactions between iron acquisition and iron-requiring processes, such as synthesis and/or repair of Fe-S clusters in biosynthetic enzymes. The polypeptide is Probable Fe(2+)-trafficking protein (Burkholderia multivorans (strain ATCC 17616 / 249)).